Reading from the N-terminus, the 195-residue chain is Imidazoleglycerol-phosphate dehydratase (195 aa).

It belongs to the imidazoleglycerol-phosphate dehydratase family.

The protein resides in the cytoplasm. It carries out the reaction D-erythro-1-(imidazol-4-yl)glycerol 3-phosphate = 3-(imidazol-4-yl)-2-oxopropyl phosphate + H2O. Its pathway is amino-acid biosynthesis; L-histidine biosynthesis; L-histidine from 5-phospho-alpha-D-ribose 1-diphosphate: step 6/9. This chain is Imidazoleglycerol-phosphate dehydratase, found in Cereibacter sphaeroides (strain ATCC 17023 / DSM 158 / JCM 6121 / CCUG 31486 / LMG 2827 / NBRC 12203 / NCIMB 8253 / ATH 2.4.1.) (Rhodobacter sphaeroides).